Here is a 243-residue protein sequence, read N- to C-terminus: NAD(P)H-quinone oxidoreductase subunit K, chloroplastic (243 aa).

[4Fe-4S] cluster-binding residues include cysteine 65, cysteine 66, cysteine 130, and cysteine 161.

Belongs to the complex I 20 kDa subunit family. In terms of assembly, NDH is composed of at least 16 different subunits, 5 of which are encoded in the nucleus. It depends on [4Fe-4S] cluster as a cofactor.

It localises to the plastid. The protein localises to the chloroplast thylakoid membrane. The catalysed reaction is a plastoquinone + NADH + (n+1) H(+)(in) = a plastoquinol + NAD(+) + n H(+)(out). It catalyses the reaction a plastoquinone + NADPH + (n+1) H(+)(in) = a plastoquinol + NADP(+) + n H(+)(out). Its function is as follows. NDH shuttles electrons from NAD(P)H:plastoquinone, via FMN and iron-sulfur (Fe-S) centers, to quinones in the photosynthetic chain and possibly in a chloroplast respiratory chain. The immediate electron acceptor for the enzyme in this species is believed to be plastoquinone. Couples the redox reaction to proton translocation, and thus conserves the redox energy in a proton gradient. The chain is NAD(P)H-quinone oxidoreductase subunit K, chloroplastic from Marchantia polymorpha (Common liverwort).